The primary structure comprises 333 residues: Phosphoribosylformylglycinamidine cyclo-ligase (333 aa).

The protein belongs to the AIR synthase family.

The protein localises to the cytoplasm. The catalysed reaction is 2-formamido-N(1)-(5-O-phospho-beta-D-ribosyl)acetamidine + ATP = 5-amino-1-(5-phospho-beta-D-ribosyl)imidazole + ADP + phosphate + H(+). It participates in purine metabolism; IMP biosynthesis via de novo pathway; 5-amino-1-(5-phospho-D-ribosyl)imidazole from N(2)-formyl-N(1)-(5-phospho-D-ribosyl)glycinamide: step 2/2. The chain is Phosphoribosylformylglycinamidine cyclo-ligase from Methanosarcina barkeri (strain Fusaro / DSM 804).